Reading from the N-terminus, the 1028-residue chain is U2 snRNP-associated SURP motif-containing protein (1028 aa).

Disordered regions lie at residues methionine 1 to lysine 111 and valine 141 to threonine 272. Alanine 2 is modified (N-acetylalanine). Positions glycine 7–threonine 16 are enriched in polar residues. A compositionally biased stretch (basic residues) spans threonine 45–asparagine 54. The span at tyrosine 55–leucine 64 shows a compositional bias: basic and acidic residues. A Phosphoserine modification is found at serine 67. Lysine 80 participates in a covalent cross-link: Glycyl lysine isopeptide (Lys-Gly) (interchain with G-Cter in SUMO2). Residues alanine 92–leucine 121 adopt a coiled-coil conformation. Basic and acidic residues-rich tracts occupy residues serine 97 to lysine 111 and alanine 144 to glycine 155. Glycyl lysine isopeptide (Lys-Gly) (interchain with G-Cter in SUMO2) cross-links involve residues lysine 145 and lysine 168. Positions asparagine 169–arginine 178 are enriched in polar residues. Basic and acidic residues predominate over residues glutamate 186 to histidine 222. The stretch at leucine 192–glutamate 232 forms a coiled coil. Serine 202 bears the Phosphoserine mark. Lysine 208 participates in a covalent cross-link: Glycyl lysine isopeptide (Lys-Gly) (interchain with G-Cter in SUMO2). Serine 236 is modified (phosphoserine). The segment covering aspartate 239–serine 249 has biased composition (basic and acidic residues). The RRM domain occupies threonine 273 to alanine 354. An SURP motif repeat occupies leucine 429 to tyrosine 472. Position 484 is a phosphoserine (serine 484). Residues leucine 533–valine 678 form the CID domain. Threonine 718 is modified (phosphothreonine). Residues lysine 747 and lysine 748 each participate in a glycyl lysine isopeptide (Lys-Gly) (interchain with G-Cter in SUMO2) cross-link. Lysine 759 is modified (N6-acetyllysine; alternate). Lysine 759 is covalently cross-linked (Glycyl lysine isopeptide (Lys-Gly) (interchain with G-Cter in SUMO2); alternate). Disordered regions lie at residues lysine 777–arginine 840 and glutamine 854–histidine 1028. Residues glutamate 779–lysine 809 adopt a coiled-coil conformation. Residues glutamate 785–threonine 805 show a composition bias toward acidic residues. Residues serine 787, serine 799, and serine 810 each carry the phosphoserine modification. Composition is skewed to basic and acidic residues over residues lysine 809–arginine 840 and glutamine 873–arginine 921. Glycyl lysine isopeptide (Lys-Gly) (interchain with G-Cter in SUMO2) cross-links involve residues lysine 821, lysine 828, and lysine 831. Positions serine 836–lysine 914 form a coiled coil. A Phosphothreonine modification is found at threonine 930. A phosphoserine mark is found at serine 945 and serine 947. Residues lysine 949 to lysine 979 are compositionally biased toward basic and acidic residues. Residues threonine 990 to histidine 1028 show a composition bias toward basic residues.

This sequence belongs to the splicing factor SR family. In terms of assembly, interacts with ERBB4.

The protein localises to the nucleus. The protein is U2 snRNP-associated SURP motif-containing protein (U2SURP) of Pongo abelii (Sumatran orangutan).